A 729-amino-acid polypeptide reads, in one-letter code: Phosphoribosylformylglycinamidine synthase subunit PurL (729 aa).

H54 is an active-site residue. ATP contacts are provided by Y57 and K96. A Mg(2+)-binding site is contributed by E98. Substrate is bound by residues S99–H102 and R121. H100 (proton acceptor) is an active-site residue. Residue D122 participates in Mg(2+) binding. Q245 contributes to the substrate binding site. D273 lines the Mg(2+) pocket. E317–Q319 provides a ligand contact to substrate. Positions 495 and 532 each coordinate ATP. A Mg(2+)-binding site is contributed by N533. S535 provides a ligand contact to substrate.

This sequence belongs to the FGAMS family. In terms of assembly, monomer. Part of the FGAM synthase complex composed of 1 PurL, 1 PurQ and 2 PurS subunits.

The protein localises to the cytoplasm. It catalyses the reaction N(2)-formyl-N(1)-(5-phospho-beta-D-ribosyl)glycinamide + L-glutamine + ATP + H2O = 2-formamido-N(1)-(5-O-phospho-beta-D-ribosyl)acetamidine + L-glutamate + ADP + phosphate + H(+). It functions in the pathway purine metabolism; IMP biosynthesis via de novo pathway; 5-amino-1-(5-phospho-D-ribosyl)imidazole from N(2)-formyl-N(1)-(5-phospho-D-ribosyl)glycinamide: step 1/2. Functionally, part of the phosphoribosylformylglycinamidine synthase complex involved in the purines biosynthetic pathway. Catalyzes the ATP-dependent conversion of formylglycinamide ribonucleotide (FGAR) and glutamine to yield formylglycinamidine ribonucleotide (FGAM) and glutamate. The FGAM synthase complex is composed of three subunits. PurQ produces an ammonia molecule by converting glutamine to glutamate. PurL transfers the ammonia molecule to FGAR to form FGAM in an ATP-dependent manner. PurS interacts with PurQ and PurL and is thought to assist in the transfer of the ammonia molecule from PurQ to PurL. In Staphylococcus aureus (strain bovine RF122 / ET3-1), this protein is Phosphoribosylformylglycinamidine synthase subunit PurL.